Reading from the N-terminus, the 223-residue chain is Imidazoleglycerol-phosphate dehydratase (223 aa).

The protein belongs to the imidazoleglycerol-phosphate dehydratase family.

The enzyme catalyses D-erythro-1-(imidazol-4-yl)glycerol 3-phosphate = 3-(imidazol-4-yl)-2-oxopropyl phosphate + H2O. The protein operates within amino-acid biosynthesis; L-histidine biosynthesis; L-histidine from 5-phospho-alpha-D-ribose 1-diphosphate: step 6/9. The protein is Imidazoleglycerol-phosphate dehydratase (HIS3) of Candida albicans (Yeast).